The chain runs to 72 residues: Translation initiation factor IF-1 (72 aa).

In terms of domain architecture, S1-like spans methionine 1 to lysine 72.

The protein belongs to the IF-1 family. Component of the 30S ribosomal translation pre-initiation complex which assembles on the 30S ribosome in the order IF-2 and IF-3, IF-1 and N-formylmethionyl-tRNA(fMet); mRNA recruitment can occur at any time during PIC assembly.

It localises to the cytoplasm. In terms of biological role, one of the essential components for the initiation of protein synthesis. Stabilizes the binding of IF-2 and IF-3 on the 30S subunit to which N-formylmethionyl-tRNA(fMet) subsequently binds. Helps modulate mRNA selection, yielding the 30S pre-initiation complex (PIC). Upon addition of the 50S ribosomal subunit IF-1, IF-2 and IF-3 are released leaving the mature 70S translation initiation complex. This is Translation initiation factor IF-1 from Streptococcus mutans serotype c (strain ATCC 700610 / UA159).